The sequence spans 338 residues: Glycerol-3-phosphate dehydrogenase [NAD(P)+] (338 aa).

Tryptophan 11, arginine 30, and lysine 107 together coordinate NADPH. Residues lysine 107, glycine 140, and serine 142 each coordinate sn-glycerol 3-phosphate. Alanine 144 contributes to the NADPH binding site. Positions 195, 248, 258, 259, and 260 each coordinate sn-glycerol 3-phosphate. Residue lysine 195 is the Proton acceptor of the active site. Arginine 259 is an NADPH binding site. The NADPH site is built by valine 283 and glutamate 285.

This sequence belongs to the NAD-dependent glycerol-3-phosphate dehydrogenase family.

Its subcellular location is the cytoplasm. The enzyme catalyses sn-glycerol 3-phosphate + NAD(+) = dihydroxyacetone phosphate + NADH + H(+). The catalysed reaction is sn-glycerol 3-phosphate + NADP(+) = dihydroxyacetone phosphate + NADPH + H(+). Its pathway is membrane lipid metabolism; glycerophospholipid metabolism. Its function is as follows. Catalyzes the reduction of the glycolytic intermediate dihydroxyacetone phosphate (DHAP) to sn-glycerol 3-phosphate (G3P), the key precursor for phospholipid synthesis. In Ralstonia nicotianae (strain ATCC BAA-1114 / GMI1000) (Ralstonia solanacearum), this protein is Glycerol-3-phosphate dehydrogenase [NAD(P)+].